Here is a 166-residue protein sequence, read N- to C-terminus: Ribonuclease H (166 aa).

One can recognise an RNase H type-1 domain in the interval 5 to 147 (PRKRVALFTD…VDREARRQAQ (143 aa)). Mg(2+) contacts are provided by D14, E52, D74, and D139. The tract at residues 128 to 166 (GHTGHPENERVDREARRQAQSQAKTPCPPRAPTLFHEEA) is disordered. Residues 131 to 144 (GHPENERVDREARR) are compositionally biased toward basic and acidic residues.

The protein belongs to the RNase H family. Monomer. Requires Mg(2+) as cofactor.

It catalyses the reaction Endonucleolytic cleavage to 5'-phosphomonoester.. Endonuclease that specifically degrades the RNA of RNA-DNA hybrids. The protein is Ribonuclease H (rnhA) of Thermus thermophilus (strain ATCC 27634 / DSM 579 / HB8).